The chain runs to 338 residues: Phenylalanine--tRNA ligase alpha subunit (338 aa).

Mg(2+) is bound at residue Glu-252.

This sequence belongs to the class-II aminoacyl-tRNA synthetase family. Phe-tRNA synthetase alpha subunit type 1 subfamily. In terms of assembly, tetramer of two alpha and two beta subunits. It depends on Mg(2+) as a cofactor.

It is found in the cytoplasm. It catalyses the reaction tRNA(Phe) + L-phenylalanine + ATP = L-phenylalanyl-tRNA(Phe) + AMP + diphosphate + H(+). This Pseudomonas aeruginosa (strain UCBPP-PA14) protein is Phenylalanine--tRNA ligase alpha subunit.